The chain runs to 206 residues: TPR repeat-containing protein YrrB (206 aa).

TPR repeat units lie at residues 1-23 (MQEG…NKED), 24-57 (AIPY…DSSA), 59-91 (TAYY…GMEN), 93-125 (DLFY…NEND), 127-159 (EARF…DPGH), and 160-193 (ADAF…QPDH).

As to quaternary structure, monomer.

In terms of biological role, could be an interacting mediator in the complex formation among RNA sulfuration components, RNA processing components, and aminoacyl-tRNA synthetases. The protein is TPR repeat-containing protein YrrB (yrrB) of Bacillus subtilis (strain 168).